The chain runs to 120 residues: Large ribosomal subunit protein bL12 (120 aa).

It belongs to the bacterial ribosomal protein bL12 family. In terms of assembly, homodimer. Part of the ribosomal stalk of the 50S ribosomal subunit. Forms a multimeric L10(L12)X complex, where L10 forms an elongated spine to which 2 to 4 L12 dimers bind in a sequential fashion. Binds GTP-bound translation factors.

Functionally, forms part of the ribosomal stalk which helps the ribosome interact with GTP-bound translation factors. Is thus essential for accurate translation. The protein is Large ribosomal subunit protein bL12 of Lactobacillus helveticus (strain DPC 4571).